The chain runs to 282 residues: 4-hydroxybenzoate octaprenyltransferase (282 aa).

The next 9 helical transmembrane spans lie at 17-37 (IGIL…NQGF), 40-60 (IDLL…GCVI), 90-110 (AFIL…KLPI), 113-133 (FYFA…KRFL), 135-155 (APQL…FIAS), 163-183 (FIVL…MYAM), 207-227 (LIIA…AINK), 231-251 (WFFY…LKLI), and 262-282 (AFLV…LALI).

This sequence belongs to the UbiA prenyltransferase family. Mg(2+) serves as cofactor.

It localises to the cell inner membrane. It catalyses the reaction all-trans-octaprenyl diphosphate + 4-hydroxybenzoate = 4-hydroxy-3-(all-trans-octaprenyl)benzoate + diphosphate. The protein operates within cofactor biosynthesis; ubiquinone biosynthesis. Functionally, catalyzes the prenylation of para-hydroxybenzoate (PHB) with an all-trans polyprenyl group. Mediates the second step in the final reaction sequence of ubiquinone-8 (UQ-8) biosynthesis, which is the condensation of the polyisoprenoid side chain with PHB, generating the first membrane-bound Q intermediate 3-octaprenyl-4-hydroxybenzoate. This is 4-hydroxybenzoate octaprenyltransferase from Legionella pneumophila subsp. pneumophila (strain Philadelphia 1 / ATCC 33152 / DSM 7513).